The following is a 1234-amino-acid chain: DNA-directed RNA polymerase I subunit RPA2 (1234 aa).

The C4-type zinc-finger motif lies at 1119–1150 (CRQCGSFLSTQPTVSPFIGKRKAVSTVRCRNC).

The protein belongs to the RNA polymerase beta chain family. In terms of assembly, component of the RNA polymerase I (Pol I) complex consisting of 14 subunits.

The protein resides in the nucleus. It is found in the nucleolus. The enzyme catalyses RNA(n) + a ribonucleoside 5'-triphosphate = RNA(n+1) + diphosphate. In terms of biological role, DNA-dependent RNA polymerase catalyzes the transcription of DNA into RNA using the four ribonucleoside triphosphates as substrates. Second largest core component of RNA polymerase I which synthesizes ribosomal RNA precursors. Proposed to contribute to the polymerase catalytic activity and forms the polymerase active center together with the largest subunit. Pol I is composed of mobile elements and RPA2 is part of the core element with the central large cleft and probably a clamp element that moves to open and close the cleft. In Neurospora crassa (strain ATCC 24698 / 74-OR23-1A / CBS 708.71 / DSM 1257 / FGSC 987), this protein is DNA-directed RNA polymerase I subunit RPA2 (acr-2).